The following is a 311-amino-acid chain: Pyrimidine-specific ribonucleoside hydrolase RihA (311 aa).

The active site involves His240.

This sequence belongs to the IUNH family. RihA subfamily.

Its function is as follows. Hydrolyzes cytidine or uridine to ribose and cytosine or uracil, respectively. The chain is Pyrimidine-specific ribonucleoside hydrolase RihA from Salmonella schwarzengrund (strain CVM19633).